Consider the following 1111-residue polypeptide: Myosin IB heavy chain (1111 aa).

Positions 9–691 (QGTDDLVMLP…TVFLLEEALD (683 aa)) constitute a Myosin motor domain. 102–109 (GESGAGKT) lines the ATP pocket. Residue Ser332 is modified to Phosphoserine. The tract at residues 547–627 (GSLQKKRPTT…GFAYRNTFDK (81 aa)) is actin-binding. The TH1 domain occupies 729-913 (KERQRNSIDR…KGLIGTIASG (185 aa)). The disordered stretch occupies residues 910-1058 (IASGLPSSTD…PAPQPSRPTA (149 aa)). The span at 914–928 (LPSSTDSTPKNYNPN) shows a compositional bias: polar residues. 3 stretches are compositionally biased toward low complexity: residues 929–944 (SMSQ…QSAG), 952–967 (GAGQ…QQRP), and 991–1012 (PMGA…LPQP). The span at 1017 to 1040 (GAPGGRGAPMGRGAPGGGPAGAGG) shows a compositional bias: gly residues. The SH3 domain occupies 1053-1111 (PSRPTAKALYDYDASSTDELSFKEGDIIFIVQKDNGGWTQGELKSGQKGWAPTNYLQYN).

Belongs to the TRAFAC class myosin-kinesin ATPase superfamily. Myosin family. As to quaternary structure, myosin I heavy chain is single-headed. Dimer of a heavy and a light chain. Inability to self-assemble into filaments.

Its subcellular location is the cell projection. It localises to the pseudopodium. It is found in the cytoplasm. The protein resides in the cell cortex. Functionally, myosin is a protein that binds to actin and has ATPase activity that is activated by actin. Myosin IB may have a role in chemotaxis and aggregation; it could serve to stabilize and even retract cortical structures, such as pseudopods and lamellopods. Involved in the whole cell motility of aggregation-stages cells. Overexpression results in significant decrease in the rate of cellular translocation and fluid-phase pinocytosis and abnormalities in the normal rearrangement of the actin cytoskeleton. The chain is Myosin IB heavy chain (myoB) from Dictyostelium discoideum (Social amoeba).